Consider the following 24-residue polypeptide: ALKCQGWVDYCNGNVECCNECVMY.

Cysteine 4 and cysteine 18 are disulfide-bonded.

The protein belongs to the neurotoxin 02 (plectoxin) family. 02 (plectoxin) subfamily. Post-translationally, contains 5 disulfide bonds. As to expression, expressed by the venom gland.

The protein resides in the secreted. In terms of biological role, potent toxin that may paralyze and/or kill insect pests such as H.virescens (lepidoptera), S.exigua (beet armyworm) and M.sexta (tobacco hornworm). The sequence is that of U1-plectoxin-Pt1e from Plectreurys tristis (Spider).